Consider the following 256-residue polypeptide: uncharacterized protein (256 aa).

It to B.subtilis LplA.

This is an uncharacterized protein from Niallia circulans (Bacillus circulans).